Consider the following 180-residue polypeptide: Translation initiation factor IF-3 (180 aa).

The protein belongs to the IF-3 family. In terms of assembly, monomer.

Its subcellular location is the cytoplasm. Its function is as follows. IF-3 binds to the 30S ribosomal subunit and shifts the equilibrium between 70S ribosomes and their 50S and 30S subunits in favor of the free subunits, thus enhancing the availability of 30S subunits on which protein synthesis initiation begins. This is Translation initiation factor IF-3 from Salmonella paratyphi A (strain ATCC 9150 / SARB42).